The following is a 145-amino-acid chain: Large ribosomal subunit protein uL16 (145 aa).

It belongs to the universal ribosomal protein uL16 family. In terms of assembly, part of the 50S ribosomal subunit.

In terms of biological role, binds 23S rRNA and is also seen to make contacts with the A and possibly P site tRNAs. This Exiguobacterium sp. (strain ATCC BAA-1283 / AT1b) protein is Large ribosomal subunit protein uL16.